Consider the following 303-residue polypeptide: Aspartate carbamoyltransferase catalytic subunit (303 aa).

Arginine 51 and threonine 52 together coordinate carbamoyl phosphate. An L-aspartate-binding site is contributed by lysine 80. Positions 101, 129, and 132 each coordinate carbamoyl phosphate. Positions 162 and 221 each coordinate L-aspartate. Residues leucine 260 and proline 261 each coordinate carbamoyl phosphate.

Belongs to the aspartate/ornithine carbamoyltransferase superfamily. ATCase family. As to quaternary structure, heterooligomer of catalytic and regulatory chains.

The enzyme catalyses carbamoyl phosphate + L-aspartate = N-carbamoyl-L-aspartate + phosphate + H(+). It participates in pyrimidine metabolism; UMP biosynthesis via de novo pathway; (S)-dihydroorotate from bicarbonate: step 2/3. Its function is as follows. Catalyzes the condensation of carbamoyl phosphate and aspartate to form carbamoyl aspartate and inorganic phosphate, the committed step in the de novo pyrimidine nucleotide biosynthesis pathway. This Saccharolobus islandicus (strain M.16.4 / Kamchatka #3) (Sulfolobus islandicus) protein is Aspartate carbamoyltransferase catalytic subunit.